The chain runs to 362 residues: RNA-binding protein 48 (362 aa).

Positions 46-124 (WYLLIQGVPA…GLLHVCYAPE (79 aa)) constitute an RRM domain. The disordered stretch occupies residues 334–362 (EVISSVPKPPEDKVEDVHRSRPLKQRRRI). The span at 342–352 (PPEDKVEDVHR) shows a compositional bias: basic and acidic residues. Basic residues predominate over residues 353–362 (SRPLKQRRRI).

It belongs to the RBM48 family. As to quaternary structure, component of the minor spliceosome. Within this complex, interacts with ARMC7 and PRPF8/PRP8.

Functionally, as a component of the minor spliceosome, involved in the splicing of U12-type introns in pre-mRNAs. The protein is RNA-binding protein 48 (RBM48) of Bos taurus (Bovine).